We begin with the raw amino-acid sequence, 738 residues long: Flowering time control protein FCA (738 aa).

The disordered stretch occupies residues 1 to 118 (MHRGGDRSTD…RGDHSDHDNR (118 aa)). Gly residues-rich tracts occupy residues 52 to 70 (RGGG…GGGR) and 81 to 98 (SGGG…GEPG). The span at 109 to 118 (RGDHSDHDNR) shows a compositional bias: basic and acidic residues. 2 consecutive RRM domains span residues 122-203 (VKLF…YADG) and 213-293 (HKLF…FADP). 2 disordered regions span residues 292–414 (DPKR…GHHL) and 566–594 (QQSN…AIIP). The segment covering 301-311 (SRGGPAFGGPG) has biased composition (gly residues). Positions 342-358 (HPSSPRSAPHQFNNFGS) are enriched in polar residues. Positions 368–377 (TVTSTTDTAT) are enriched in low complexity. Composition is skewed to polar residues over residues 383 to 401 (FSGN…SSHM) and 575 to 594 (PTQG…AIIP). Residues 609 to 642 (VPLTCNWTEHTSPEGFKYYYNSITRESKWDKPEE) enclose the WW domain. Residues 670–738 (MQQLQSPPQA…QSAQERAWKS (69 aa)) are disordered. Over residues 683–706 (PAMQPVQQIPQAQQGQQQMQMKQQ) the composition is skewed to low complexity. Positions 723–732 (RIQQGIQSAQ) are enriched in polar residues.

Interacts with FY. Binds to SF1, FIK, RPRD1B, Os09g0509000/LOC_Os09g33480 and MADS8. In terms of tissue distribution, mostly expressed in young flowers (panicles) and stems, and also present in young seedlings leaves and roots.

It is found in the nucleus. Functionally, plays a major role in the promotion of the transition of the vegetative meristem to reproductive development. Required for RNA-mediated chromatin silencing of a range of loci in the genome. Cotranscriptionally recognizes aberrant RNA and marks it for silencing. Controls alternative cleavage and polyadenylation on pre-mRNAs and antisense RNAs. Regulates flowering time, seed size and cell volume, probably via the modulation of cell size. The protein is Flowering time control protein FCA of Oryza sativa subsp. japonica (Rice).